The sequence spans 226 residues: Gap junction beta-2 protein (226 aa).

Residues 2 to 13 lie within the membrane without spanning it; the sequence is DWGALQTILGGV. The Cytoplasmic segment spans residues 14-20; it reads NKYSTSI. The helical transmembrane segment at 21–40 threads the bilayer; the sequence is GKIWLTVLFIFRIMILVVAA. The Extracellular segment spans residues 41–73; it reads KEVWGDEQADFVCNTLQPGCKNVCYDHYFPISH. The Ca(2+) site is built by Glu-42, Gly-45, and Glu-47. 3 disulfides stabilise this stretch: Cys-53/Cys-180, Cys-60/Cys-174, and Cys-64/Cys-169. Residues 74–94 traverse the membrane as a helical segment; that stretch reads IRLWALQLIFVSTPALLVAMH. Topologically, residues 95–135 are cytoplasmic; sequence VAYRRHEKKRKFIKGEIKNEFKDIEEIKTQKVRIEGSLWWT. The helical transmembrane segment at 136-156 threads the bilayer; the sequence is YTSSIFFRVVFEAAFMYVFYV. Topologically, residues 157–189 are extracellular; the sequence is MYDGFSMQRLVKCNAWPCPNTVDCFVSRPTEKT. A helical membrane pass occupies residues 190-210; that stretch reads VFTVFMIAVSGICILLNVTEL. At 211–226 the chain is on the cytoplasmic side; the sequence is CYLLIRYCSGKSKKPV.

The protein belongs to the connexin family. Beta-type (group I) subfamily. A hemichannel or connexon is composed of a hexamer of connexins. A functional gap junction is formed by the apposition of two hemichannels. Forms heteromeric channels with GJB4. Interacts with CNST.

Its subcellular location is the cell membrane. It localises to the cell junction. It is found in the gap junction. Functionally, structural component of gap junctions. Gap junctions are dodecameric channels that connect the cytoplasm of adjoining cells. They are formed by the docking of two hexameric hemichannels, one from each cell membrane. Small molecules and ions diffuse from one cell to a neighboring cell via the central pore. In Macaca mulatta (Rhesus macaque), this protein is Gap junction beta-2 protein (GJB2).